A 399-amino-acid polypeptide reads, in one-letter code: MRLTQMPSEFQKALPVLEKIKEAGFEAYFVGGSVRDALLHSPIHDVDIATSSYPEETKQIFPRTADIGIEHGTVLVLDGDEEYEVTTFRTEDVYVDYRRPSAVSFVRSLEEDLKRRDFTVNAFALDETGEIVDLFHGLEDLEKQVLRAVGVASERFNEDALRIMRGFRFQASLGFALEPETFKAMKTLTPLLEKISVERTFVEFDKLLLAPFWRRGLASMIESQAYDYLPDMASSQDKLNRLFDLETDFTFESSEQAWAALLWALEIENAQSFLKSWKTSRQFAKQVQDLLIILALRENGELSKRDCYRFDIDLLLQAENLRQAQGKEVNPQAITEKYQSLTIHDKKEIQINGGILIKEYGYQPGPDLGEILTEIEFAIVDGELENNREAIHAYLREKK.

ATP-binding residues include G32 and R35. G32 and R35 together coordinate CTP. Residues D45 and D47 each contribute to the Mg(2+) site. 5 residues coordinate ATP: R116, D159, R162, R165, and R168. CTP is bound by residues R116, D159, R162, R165, and R168.

This sequence belongs to the tRNA nucleotidyltransferase/poly(A) polymerase family. Bacterial CCA-adding enzyme type 3 subfamily. As to quaternary structure, homodimer. Mg(2+) serves as cofactor.

The catalysed reaction is a tRNA precursor + 2 CTP + ATP = a tRNA with a 3' CCA end + 3 diphosphate. The enzyme catalyses a tRNA with a 3' CCA end + 2 CTP + ATP = a tRNA with a 3' CCACCA end + 3 diphosphate. Catalyzes the addition and repair of the essential 3'-terminal CCA sequence in tRNAs without using a nucleic acid template. Adds these three nucleotides in the order of C, C, and A to the tRNA nucleotide-73, using CTP and ATP as substrates and producing inorganic pyrophosphate. tRNA 3'-terminal CCA addition is required both for tRNA processing and repair. Also involved in tRNA surveillance by mediating tandem CCA addition to generate a CCACCA at the 3' terminus of unstable tRNAs. While stable tRNAs receive only 3'-terminal CCA, unstable tRNAs are marked with CCACCA and rapidly degraded. This is CCA-adding enzyme from Streptococcus pneumoniae serotype 4 (strain ATCC BAA-334 / TIGR4).